Consider the following 425-residue polypeptide: Serine--tRNA ligase (425 aa).

230-232 (TAE) serves as a coordination point for L-serine. 261 to 263 (RSE) is a binding site for ATP. Glu284 lines the L-serine pocket. 348 to 351 (EISS) contacts ATP. An L-serine-binding site is contributed by Ser384.

This sequence belongs to the class-II aminoacyl-tRNA synthetase family. Type-1 seryl-tRNA synthetase subfamily. As to quaternary structure, homodimer. The tRNA molecule binds across the dimer.

The protein localises to the cytoplasm. It catalyses the reaction tRNA(Ser) + L-serine + ATP = L-seryl-tRNA(Ser) + AMP + diphosphate + H(+). The catalysed reaction is tRNA(Sec) + L-serine + ATP = L-seryl-tRNA(Sec) + AMP + diphosphate + H(+). It participates in aminoacyl-tRNA biosynthesis; selenocysteinyl-tRNA(Sec) biosynthesis; L-seryl-tRNA(Sec) from L-serine and tRNA(Sec): step 1/1. Catalyzes the attachment of serine to tRNA(Ser). Is also able to aminoacylate tRNA(Sec) with serine, to form the misacylated tRNA L-seryl-tRNA(Sec), which will be further converted into selenocysteinyl-tRNA(Sec). This chain is Serine--tRNA ligase, found in Streptococcus equi subsp. zooepidemicus (strain MGCS10565).